Reading from the N-terminus, the 141-residue chain is Protein X (141 aa).

The span at 24–48 shows a compositional bias: low complexity; the sequence is QSSGPPFPRPSAGSAASPASSLSAS. Residues 24 to 51 form a disordered region; that stretch reads QSSGPPFPRPSAGSAASPASSLSASDES. Positions 68–113 are mitochondrial targeting sequence; the sequence is PCCLVVTCAELRTMDSTVNFVSWHANRQLGMPSKDLWTPYIRDQLL.

The protein belongs to the orthohepadnavirus protein X family. In terms of assembly, may form homodimer. May interact with host CEBPA, CFLAR, CREB1, DDB1, E4F1, HBXIP, HSPD1/HSP60, NFKBIA, POLR2E and SMAD4. Interacts with host SMC5-SMC6 complex and induces its degradation. Interacts with host TRPC4AP; leading to prevent ubiquitination of TRPC4AP. Interacts with host PLSCR1; this interaction promotes ubiquitination and degradation of HBx and impairs HBx-mediated cell proliferation. In terms of processing, a fraction may be phosphorylated in insect cells and HepG2 cells, a human hepatoblastoma cell line. Phosphorylated in vitro by host protein kinase C or mitogen-activated protein kinase. N-acetylated in insect cells.

The protein resides in the host cytoplasm. The protein localises to the host nucleus. It localises to the host mitochondrion. Multifunctional protein that plays a role in silencing host antiviral defenses and promoting viral transcription. Does not seem to be essential for HBV infection. May be directly involved in development of cirrhosis and liver cancer (hepatocellular carcinoma). Most of cytosolic activities involve modulation of cytosolic calcium. The effect on apoptosis is controversial depending on the cell types in which the studies have been conducted. May induce apoptosis by localizing in mitochondria and causing loss of mitochondrial membrane potential. May also modulate apoptosis by binding host CFLAR, a key regulator of the death-inducing signaling complex (DISC). Promotes viral transcription by using the host E3 ubiquitin ligase DDB1 to target the SMC5-SMC6 complex to proteasomal degradation. This host complex would otherwise bind to viral episomal DNA, and prevents its transcription. Moderately stimulates transcription of many different viral and cellular transcription elements. Promoters and enhancers stimulated by HBx contain DNA binding sites for NF-kappa-B, AP-1, AP-2, c-EBP, ATF/CREB, or the calcium-activated factor NF-AT. This Woodchuck hepatitis B virus (isolate 1) (WHV) protein is Protein X.